The sequence spans 431 residues: Adenylosuccinate synthetase (431 aa).

GTP is bound by residues 13 to 19 (GDEGKGK) and 41 to 43 (GHT). The Proton acceptor role is filled by aspartate 14. Mg(2+) contacts are provided by aspartate 14 and glycine 41. IMP contacts are provided by residues 14 to 17 (DEGK), 39 to 42 (NAGH), threonine 130, arginine 144, glutamine 225, threonine 240, and arginine 304. Histidine 42 functions as the Proton donor in the catalytic mechanism. 300 to 306 (TTTGRSR) serves as a coordination point for substrate. Residues arginine 306, 332-334 (KLD), and 414-416 (STG) each bind GTP.

It belongs to the adenylosuccinate synthetase family. Homodimer. Mg(2+) serves as cofactor.

It is found in the cytoplasm. It catalyses the reaction IMP + L-aspartate + GTP = N(6)-(1,2-dicarboxyethyl)-AMP + GDP + phosphate + 2 H(+). It functions in the pathway purine metabolism; AMP biosynthesis via de novo pathway; AMP from IMP: step 1/2. Its function is as follows. Plays an important role in the de novo pathway of purine nucleotide biosynthesis. Catalyzes the first committed step in the biosynthesis of AMP from IMP. This is Adenylosuccinate synthetase from Marinobacter nauticus (strain ATCC 700491 / DSM 11845 / VT8) (Marinobacter aquaeolei).